The chain runs to 261 residues: tRNA pseudouridine synthase A (261 aa).

Aspartate 51 serves as the catalytic Nucleophile. Substrate is bound at residue tyrosine 109.

This sequence belongs to the tRNA pseudouridine synthase TruA family. Homodimer.

The enzyme catalyses uridine(38/39/40) in tRNA = pseudouridine(38/39/40) in tRNA. Its function is as follows. Formation of pseudouridine at positions 38, 39 and 40 in the anticodon stem and loop of transfer RNAs. This is tRNA pseudouridine synthase A from Psychromonas ingrahamii (strain DSM 17664 / CCUG 51855 / 37).